Consider the following 711-residue polypeptide: Receptor-like protein 43 (711 aa).

An N-terminal signal peptide occupies residues 1–30 (MKGFWNSKSTIRITLSFIFLFISQFSDVLA). At 31-666 (APTRHLCRPE…EDEEVISWIA (636 aa)) the chain is on the extracellular side. Asn78, Asn114, Asn143, Asn167, and Asn191 each carry an N-linked (GlcNAc...) asparagine glycan. LRR repeat units lie at residues 120–143 (LHFLTTLDLSFNDFKGQIMSSIEN), 144–168 (LSHLTYLDLSFNHFSGQVPSSIGNL), 170–192 (HLTFLDLYCNQFSGQVPSSIGNL), 193–216 (SHLTTLELSFNRFFGQFPSSIGGL), 218–240 (HLTTLNLFVNNFLGQIPSSIGNL), 241–266 (SNLTSLYLCKNNFSGQIPSFIGNLSQ), 268–288 (TRLDLSSNNFFGEIPGWLWTL), and 289–316 (PNLFYVNLSYNTFIGFQRPNKPEPSMGH). Residues Asn239, Asn242, Asn252, and Asn263 are each glycosylated (N-linked (GlcNAc...) asparagine). Asn295, Asn323, Asn347, Asn362, and Asn372 each carry an N-linked (GlcNAc...) asparagine glycan. One copy of the LRR 9; degenerate repeat lies at 317–334 (LLGSNNNFTGKIPSFICE). 10 LRR repeats span residues 335 to 358 (LRSLETLDLSDNNFSGLIPRCMGN), 360 to 384 (KSNLSHLNLRQNNLSGGLPKHIFEI), 386 to 406 (RSLDVGHNQLVGKLPRSLRFF), 407 to 430 (STLEVLNVESNRINDTFPFWLTSL), 431 to 452 (PKLQVLVLRSNAFHGPIHEASF), 453 to 476 (LKLRIIDISHNHFNGTLPSDYFVK), 519 to 543 (LTIYTALDFSGNKFEGEIPKSIGLL), 544 to 567 (KELLVLNLSNNAFTGHIPSSMGKL), 568 to 591 (TALESLDVSQNKLYGEIPQEIGNL), and 593 to 616 (FLSCMNFSHNQLAGLVPGGQQFLT). The N-linked (GlcNAc...) asparagine glycan is linked to Asn420. A glycan (N-linked (GlcNAc...) asparagine) is linked at Asn466. 3 N-linked (GlcNAc...) asparagine glycosylation sites follow: Asn550, Asn590, and Asn598. A helical membrane pass occupies residues 667 to 687 (AAIGFIPGIVLGLTIGYILVF). Over 688–711 (YKPEWFIKTFGRNNCRRRSTTTTH) the chain is Cytoplasmic.

Belongs to the RLP family.

The protein localises to the cell membrane. The sequence is that of Receptor-like protein 43 from Arabidopsis thaliana (Mouse-ear cress).